Reading from the N-terminus, the 68-residue chain is uncharacterized protein (68 aa).

The disordered stretch occupies residues 1 to 68 (METIIRRFSP…GNSKNIKTKK (68 aa)). Residues 9–34 (SPKEKEKEKEKEEKDEKSKDKKEPIK) show a composition bias toward basic and acidic residues. The segment covering 42 to 51 (DEEEEEDEQE) has biased composition (acidic residues).

This is an uncharacterized protein from Dictyostelium discoideum (Social amoeba).